The following is a 354-amino-acid chain: Phospho-N-acetylmuramoyl-pentapeptide-transferase (354 aa).

Helical transmembrane passes span 23–43, 66–86, 88–108, 138–158, 161–181, 193–213, 227–247, 257–277, 282–302, and 331–351; these read IAFF…IAWA, TPTM…LLCS, LTNT…FIGF, FALS…FIPF, YALF…ITAS, GLAS…VYLC, VVGV…ILGF, VFMG…TGVV, ILLI…ILQV, and KIIV…LTTL.

It belongs to the glycosyltransferase 4 family. MraY subfamily. Mg(2+) is required as a cofactor.

It localises to the cell inner membrane. It catalyses the reaction UDP-N-acetyl-alpha-D-muramoyl-L-alanyl-gamma-D-glutamyl-meso-2,6-diaminopimeloyl-D-alanyl-D-alanine + di-trans,octa-cis-undecaprenyl phosphate = di-trans,octa-cis-undecaprenyl diphospho-N-acetyl-alpha-D-muramoyl-L-alanyl-D-glutamyl-meso-2,6-diaminopimeloyl-D-alanyl-D-alanine + UMP. It participates in cell wall biogenesis; peptidoglycan biosynthesis. Functionally, catalyzes the initial step of the lipid cycle reactions in the biosynthesis of the cell wall peptidoglycan: transfers peptidoglycan precursor phospho-MurNAc-pentapeptide from UDP-MurNAc-pentapeptide onto the lipid carrier undecaprenyl phosphate, yielding undecaprenyl-pyrophosphoryl-MurNAc-pentapeptide, known as lipid I. The sequence is that of Phospho-N-acetylmuramoyl-pentapeptide-transferase from Campylobacter hominis (strain ATCC BAA-381 / DSM 21671 / CCUG 45161 / LMG 19568 / NCTC 13146 / CH001A).